The primary structure comprises 114 residues: Putative pterin-4-alpha-carbinolamine dehydratase (114 aa).

Belongs to the pterin-4-alpha-carbinolamine dehydratase family.

It catalyses the reaction (4aS,6R)-4a-hydroxy-L-erythro-5,6,7,8-tetrahydrobiopterin = (6R)-L-erythro-6,7-dihydrobiopterin + H2O. The polypeptide is Putative pterin-4-alpha-carbinolamine dehydratase (Chlorobium luteolum (strain DSM 273 / BCRC 81028 / 2530) (Pelodictyon luteolum)).